The primary structure comprises 186 residues: Large ribosomal subunit protein uL15 (186 aa).

Residues 1 to 48 (MDLSSLRPAKGAVKARKRVGRGPGSGNGTTAGKGNKGQQSRSGYQRPV) form a disordered region. Gly residues predominate over residues 21 to 35 (RGPGSGNGTTAGKGN).

This sequence belongs to the universal ribosomal protein uL15 family. In terms of assembly, part of the 50S ribosomal subunit.

In terms of biological role, binds to the 23S rRNA. The protein is Large ribosomal subunit protein uL15 of Chlorobaculum tepidum (strain ATCC 49652 / DSM 12025 / NBRC 103806 / TLS) (Chlorobium tepidum).